The chain runs to 539 residues: MEGGAMMLLEVKNVTKKFGDKVVLKNISFTLEEGESLGILGKSGAGKSVLLHMLRGMDGYEPTEGQIIYHVSYCEKCGYVDVPSKAGTPCKKCGNELKKIEVDFWNDKKYTYNLKRKIAIMLQRTFALYGEKTVLENILEALHQAGYEGKEAIDMALKLIKMVKLEHRITHIARDLSGGEKQRVVLARQIAKEPFIFLADEPTGTLDPQTAKLVHSALKELVIKNKISLILTSHWPEVIAELTEKAIWLDKGEIIMEGTSEEVVNKFMETVKEFKKPETEVEIKEDIIKLENVSKHYCSVERGVIKAVDNVTLNIREREIFGLVGTSGAGKTTLAKIIAGVLPPSKGKYWFRVGDEWVDMTKPGPMGRGRAKRYIGILFQEYALYPHRTILENLTEAIGLELPDEFARMKAVYTLVSVGFSEEEAEEILDKYPHELSVGERHRCALAQVLIKEPRVVILDEPTGTMDPITRNTVAESIHKSRIELEQTYIIVSHDMDFVLNVCDRAGLMRNGKLIKVGKPEEIVALLTEEEKQEMFGQK.

ABC transporter domains are found at residues leucine 9–lysine 276 and isoleucine 288–phenylalanine 536. Residues glycine 41–serine 48 and glycine 325–threonine 332 contribute to the ATP site.

It belongs to the ABC transporter superfamily.

This is an uncharacterized protein from Methanocaldococcus jannaschii (strain ATCC 43067 / DSM 2661 / JAL-1 / JCM 10045 / NBRC 100440) (Methanococcus jannaschii).